The following is a 121-amino-acid chain: uncharacterized protein (121 aa).

The interval 20-98 is disordered; sequence NEVRTSQSEV…PYYHGSKAST (79 aa). The span at 35–51 shows a compositional bias: basic and acidic residues; the sequence is KKSDNGEKDEKEEKELN.

This is an uncharacterized protein from Invertebrate iridescent virus 6 (IIV-6).